Here is a 92-residue protein sequence, read N- to C-terminus: Small ribosomal subunit protein uS19 (92 aa).

It belongs to the universal ribosomal protein uS19 family.

Protein S19 forms a complex with S13 that binds strongly to the 16S ribosomal RNA. The polypeptide is Small ribosomal subunit protein uS19 (Francisella tularensis subsp. tularensis (strain FSC 198)).